The primary structure comprises 801 residues: U-box domain-containing protein 34 (801 aa).

The segment at 205–309 (RSPTLPDPRQ…PETSRKSKKV (105 aa)) is disordered. The segment covering 236–254 (LTCNKPKTPQSSKASSATT) has biased composition (polar residues). The span at 289–309 (VSEHRDSDRSPPETSRKSKKV) shows a compositional bias: basic and acidic residues. Residues 301–395 (ETSRKSKKVE…ETAKALLARE (95 aa)) adopt a coiled-coil conformation. The Protein kinase domain occupies 442–705 (FSPEKVIGEG…DLKSEVIPVL (264 aa)). ATP-binding positions include 448–456 (IGEGGYGKV) and lysine 469. Aspartate 564 acts as the Proton acceptor in catalysis. The U-box domain occupies 724 to 797 (RAPSHYFCPI…RDWKSRVRFS (74 aa)).

Belongs to the protein kinase superfamily. Ser/Thr protein kinase family.

It carries out the reaction L-seryl-[protein] + ATP = O-phospho-L-seryl-[protein] + ADP + H(+). It catalyses the reaction L-threonyl-[protein] + ATP = O-phospho-L-threonyl-[protein] + ADP + H(+). The catalysed reaction is S-ubiquitinyl-[E2 ubiquitin-conjugating enzyme]-L-cysteine + [acceptor protein]-L-lysine = [E2 ubiquitin-conjugating enzyme]-L-cysteine + N(6)-ubiquitinyl-[acceptor protein]-L-lysine.. The protein operates within protein modification; protein ubiquitination. In terms of biological role, functions as an E3 ubiquitin ligase. In Arabidopsis thaliana (Mouse-ear cress), this protein is U-box domain-containing protein 34 (PUB34).